The primary structure comprises 226 residues: CRISPR-associated endonuclease Cas3-HD (226 aa).

An HD Cas3-type domain is found at 9 to 204 (GRDCLQTYED…HVLTVCDNWG (196 aa)). The Mg(2+) site is built by Asp-56, His-74, His-101, and His-102.

This sequence belongs to the CRISPR-associated nuclease Cas3-HD family. Monomer. Can form a Cascade complex with Csa5, Cas7, Cas5a, Cas3 and Cas8a2. The cofactor is Mg(2+).

In terms of biological role, CRISPR (clustered regularly interspaced short palindromic repeat), is an adaptive immune system that provides protection against mobile genetic elements (viruses, transposable elements and conjugative plasmids). CRISPR clusters contain sequences complementary to antecedent mobile elements and target invading nucleic acids. CRISPR clusters are transcribed and processed into CRISPR RNA (crRNA). Cas3 plus Cascade participate in CRISPR interference, the third stage of CRISPR immunity. Acts as a ssDNA and ssRNA nuclease, probably with both exo- and endonuclease activities. Activity is higher for DNA than RNA. The sequence is that of CRISPR-associated endonuclease Cas3-HD (cas3') from Thermoproteus tenax (strain ATCC 35583 / DSM 2078 / JCM 9277 / NBRC 100435 / Kra 1).